Reading from the N-terminus, the 997-residue chain is Synaptonemal complex protein 1 (997 aa).

The Mediates head to head self-assembly of N-terminal ends signature appears at 102 to 112; that stretch reads PMSRLYSKLYK. Positions 118 to 121 match the Nuclear localization signal motif; it reads KKWK. Coiled coils occupy residues 121–176 and 212–696; these read KVSI…LIKE and YVDL…KKIS. Residues 207 to 363 form an interaction with SYCE3 region; the sequence is ETRQVYVDLN…YQLTEEKEAQ (157 aa). Residues 698-792 are required for pH-induced assembly of C-terminal ends into antiparallel tetramers; it reads EKLLGEVEKA…VSLKKQLEVE (95 aa). The Nuclear localization signal motif lies at 701-704; it reads LGEV. Positions 768 to 806 form a coiled coil; that stretch reads KVALETELSNIRNELVSLKKQLEVEKEEKEKLKMEQENT. Positions 805–997 are DNA-binding; the sequence is NTAILTDKKD…RLKEAEKLFT (193 aa). S824 carries the phosphoserine modification. Residues 828–863 form a disordered region; the sequence is TSWKFDSKTTPSQNISRLSSSMDSGKSKDNRDSLRA. A compositionally biased stretch (polar residues) spans 835–851; sequence KTTPSQNISRLSSSMDS. Residues 852–861 are compositionally biased toward basic and acidic residues; that stretch reads GKSKDNRDSL. A Nuclear localization signal motif is present at residues 902–905; that stretch reads KKRK. At T940 the chain carries Phosphothreonine.

Structural component of synaptonemal complexes. Homotetramer that consists of an N-terminal four-helical bundle that bifurcates into two elongated C-terminal dimeric coiled coils. This tetrameric building block potentially self-assembles into a supramolecular zipper-like lattice to mediate meiotic chromosome synapsis. Self-assembly is likely initiated by local proton density at chromosome axis, which is predicted to trigger antiparallel back to back assembly of adjacent C-terminal ends into tetrameric structures that anchor to chromosomal DNA. Then the N-terminal ends are predicted to undergo cooperative antiparallel head to head assembly at the midline of synaptonemal complexes central element to form a zipper-like lattice between properly aligned homologous chromosomes. The nascent synapsis generated by SYCP1 is stabilized through interaction with central element proteins SYCE1 and SYCE2. Interacts (via tetrameric core) with SYCE3; the interaction remodels SYCP1 homotetramers to 2:1 heterotrimers with SYCE3. SYCP1/SYCE3 heterotrimers form lattice assemblies as part of the mature synaptonemal complex via both lateral and head-to-head interactions. Forms a complex with EWSR1, PRDM9, SYCP3 and REC8; complex formation is dependent of phosphorylated form of REC8 and requires PRDM9 bound to hotspot DNA; EWSR1 joins PRDM9 with the chromosomal axis through REC8. Interacts with SPO16. Testis.

It localises to the nucleus. It is found in the chromosome. The protein localises to the centromere. In terms of biological role, major component of the transverse filaments of synaptonemal complexes, formed between homologous chromosomes during meiotic prophase. Required for normal assembly of the central element of the synaptonemal complexes. Required for normal centromere pairing during meiosis. Required for normal meiotic chromosome synapsis during oocyte and spermatocyte development and for normal male and female fertility. This chain is Synaptonemal complex protein 1, found in Rattus norvegicus (Rat).